The chain runs to 353 residues: JmjC domain-containing protein E (353 aa).

The region spanning 138 to 348 is the JmjC domain; sequence YYIQYQNNSL…ETTKYQKQIK (211 aa).

The polypeptide is JmjC domain-containing protein E (jcdE) (Dictyostelium discoideum (Social amoeba)).